The chain runs to 553 residues: Probable cytochrome P450 301a1, mitochondrial (553 aa).

Cysteine 502 lines the heme pocket.

Belongs to the cytochrome P450 family. Heme is required as a cofactor.

Its subcellular location is the mitochondrion membrane. The polypeptide is Probable cytochrome P450 301a1, mitochondrial (Cyp301a1) (Drosophila melanogaster (Fruit fly)).